Here is a 369-residue protein sequence, read N- to C-terminus: Leucine carboxyl methyltransferase 1 (369 aa).

S-adenosyl-L-methionine is bound by residues Arg-84, Gly-108, Asp-132, 187-188, and Glu-215; that span reads DL.

This sequence belongs to the methyltransferase superfamily. LCMT family.

The catalysed reaction is [phosphatase 2A protein]-C-terminal L-leucine + S-adenosyl-L-methionine = [phosphatase 2A protein]-C-terminal L-leucine methyl ester + S-adenosyl-L-homocysteine. Functionally, methylates the carboxyl group of the C-terminal leucine residue of protein phosphatase 2A catalytic subunits to form alpha-leucine ester residues. The sequence is that of Leucine carboxyl methyltransferase 1 (PPM1) from Debaryomyces hansenii (strain ATCC 36239 / CBS 767 / BCRC 21394 / JCM 1990 / NBRC 0083 / IGC 2968) (Yeast).